Reading from the N-terminus, the 331-residue chain is MHRRVITFSKNAFLPLTTVCQNRCGYCCFRTPVREGCVMAPTEAIRTLEASAALGCTEALFTFGERPGAVPGFNEMLGRLGYADILDYVYHLSLAAIERDLLPHTNAGILTYAELDRLREVNASMGLMLETTADVPAHRNSPGKDPAVRIEMIENAGKLSIPFTTGILLGIGETEDDREESLRVIADLHRRYGHIQEVIVQNFCPKPGTAMEGAAVPGPDEIGAAISLAREILPADVAVQIPPNLADASRLIGCGVNDLGGVSPLTIDYVNPEHPWPQLDELRRIAGDAELRERLCIYPQYIEKGRYSPLLEPLIRRLAERIAAPGRDAGA.

The region spanning 6–244 (ITFSKNAFLP…ADVAVQIPPN (239 aa)) is the Radical SAM core domain. The [4Fe-4S] cluster site is built by Cys20, Cys24, and Cys27.

It belongs to the radical SAM superfamily. CofG family. Consists of two subunits, CofG and CofH. It depends on [4Fe-4S] cluster as a cofactor.

The enzyme catalyses 5-amino-5-(4-hydroxybenzyl)-6-(D-ribitylimino)-5,6-dihydrouracil + S-adenosyl-L-methionine = 7,8-didemethyl-8-hydroxy-5-deazariboflavin + 5'-deoxyadenosine + L-methionine + NH4(+) + H(+). Its pathway is cofactor biosynthesis; coenzyme F0 biosynthesis. Catalyzes the radical-mediated synthesis of 7,8-didemethyl-8-hydroxy-5-deazariboflavin from 5-amino-5-(4-hydroxybenzyl)-6-(D-ribitylimino)-5,6-dihydrouracil. The sequence is that of 7,8-didemethyl-8-hydroxy-5-deazariboflavin synthase from Methanoculleus marisnigri (strain ATCC 35101 / DSM 1498 / JR1).